The chain runs to 81 residues: Accessory gland protein Acp63F (81 aa).

The N-terminal stretch at 1–16 is a signal peptide; that stretch reads MKAIIVFILFISSVHA.

As to expression, main cells of accessory gland and seminal fluid.

It is found in the secreted. Responsible for physiological and behavioral changes in mated female flies. In Drosophila melanogaster (Fruit fly), this protein is Accessory gland protein Acp63F (Acp63F).